Reading from the N-terminus, the 614-residue chain is Jacalin-related lectin 14 (614 aa).

4 Jacalin-type lectin domains span residues 27 to 169, 172 to 314, 317 to 462, and 468 to 611; these read VQKM…YFSW, PRKM…YFTT, PTKS…YFSP, and AEKL…HVVP.

Belongs to the jacalin lectin family.

The polypeptide is Jacalin-related lectin 14 (JAL14) (Arabidopsis thaliana (Mouse-ear cress)).